A 494-amino-acid polypeptide reads, in one-letter code: Lysine--tRNA ligase (494 aa).

Residues E399 and E406 each coordinate Mg(2+).

This sequence belongs to the class-II aminoacyl-tRNA synthetase family. Requires Mg(2+) as cofactor.

The protein resides in the cytoplasm. It catalyses the reaction tRNA(Lys) + L-lysine + ATP = L-lysyl-tRNA(Lys) + AMP + diphosphate. The polypeptide is Lysine--tRNA ligase (lysS) (Saccharolobus solfataricus (strain ATCC 35092 / DSM 1617 / JCM 11322 / P2) (Sulfolobus solfataricus)).